Reading from the N-terminus, the 113-residue chain is Signal peptidase complex subunit 1 (113 aa).

Over M1–Q32 the chain is Cytoplasmic. Residues V33–S53 traverse the membrane as a helical segment. At Y54–Y57 the chain is on the lumenal side. Residues T58 to F78 traverse the membrane as a helical segment. Topologically, residues R79–K113 are cytoplasmic. A disordered region spans residues I89 to K113.

This sequence belongs to the SPCS1 family. Component of the signal peptidase complex (SPC) composed of a catalytic subunit sec-11 and three accessory subunits spcs-1, spcs-2 and spcs-3. The complex induces a local thinning of the ER membrane which is used to measure the length of the signal peptide (SP) h-region of protein substrates. This ensures the selectivity of the complex towards h-regions shorter than 18-20 amino acids.

It localises to the endoplasmic reticulum membrane. Functionally, component of the signal peptidase complex (SPC) which catalyzes the cleavage of N-terminal signal sequences from nascent proteins as they are translocated into the lumen of the endoplasmic reticulum. Dispensable for SPC enzymatic activity. This is Signal peptidase complex subunit 1 from Caenorhabditis briggsae.